The primary structure comprises 474 residues: BPI fold-containing family B member 1 (474 aa).

Positions 1–21 are cleaved as a signal peptide; the sequence is MAGPWIITLLCGLLGATLVQA. Asparagine 153, asparagine 160, asparagine 263, and asparagine 400 each carry an N-linked (GlcNAc...) asparagine glycan. Cysteine 157 and cysteine 200 are joined by a disulfide.

It belongs to the BPI/LBP/Plunc superfamily. Plunc family. As to expression, expressed in tongue, lung, thymus, and stomach. Expressed in epithelia of palate, anterior pharynx, trachea and upper bronchi. Expressed in distal tip of papillae in the anterior third of the tongue and in serous cells of von Ebner glands in the posterior third of the tongue. Expressed in columnar epithelium of the duodenum in embryonic gut at 16.5 dpc.

It localises to the secreted. Functionally, may play a role in innate immunity in mouth, nose and lungs. Binds bacterial lipopolysaccharide (LPS) and modulates the cellular responses to LPS. May be involved in formation of the left-right axis in the node of the developing embryo. The protein is BPI fold-containing family B member 1 (Bpifb1) of Mus musculus (Mouse).